A 123-amino-acid polypeptide reads, in one-letter code: Small ribosomal subunit protein uS12 (123 aa).

Residue Asp-89 is modified to 3-methylthioaspartic acid.

It belongs to the universal ribosomal protein uS12 family. In terms of assembly, part of the 30S ribosomal subunit. Contacts proteins S8 and S17. May interact with IF1 in the 30S initiation complex.

Functionally, with S4 and S5 plays an important role in translational accuracy. Interacts with and stabilizes bases of the 16S rRNA that are involved in tRNA selection in the A site and with the mRNA backbone. Located at the interface of the 30S and 50S subunits, it traverses the body of the 30S subunit contacting proteins on the other side and probably holding the rRNA structure together. The combined cluster of proteins S8, S12 and S17 appears to hold together the shoulder and platform of the 30S subunit. The sequence is that of Small ribosomal subunit protein uS12 from Pelagibacter ubique (strain HTCC1062).